Here is a 331-residue protein sequence, read N- to C-terminus: MAIPSNRDQLALSNGSHPEEYKIAALVFYSCIFLIGLLVNVTALWVFSCTTKKRTTVTIYMMNVALLDLVFILSLPFRMFYYAKGEWPFGDYFCHILGALVVFYPSLALWLLALISADRYMAIVQPKYAKELKNTGKAVLACVGVWIMTLTTTVPLLLLDEDPDKASSPATCLKISDIIHLKAVNVLNFTRLIFFFLIPLFIMIGCYVVIIHSLLRGQTSKLKPKVKEKSIRIIVTLLLQVLACFVPFHICFALLMLQGEENSYSPWGAFTTFLMNLSTCLDVVLYYIVSKQFQARVISVMLYRNYLRSVRRKSVRSGSLRSLSNMNSEML.

The Extracellular portion of the chain corresponds to Met-1–Leu-26. Residue Asn-14 is glycosylated (N-linked (GlcNAc...) asparagine). Residues Val-27–Phe-47 form a helical membrane-spanning segment. At Ser-48–Thr-56 the chain is on the cytoplasmic side. Residues Val-57–Phe-77 form a helical membrane-spanning segment. Over Arg-78–His-95 the chain is Extracellular. A disulfide bridge connects residues Cys-94 and Cys-172. The chain crosses the membrane as a helical span at residues Ile-96 to Ser-116. Residues Ala-117–Ala-138 are Cytoplasmic-facing. The chain crosses the membrane as a helical span at residues Val-139–Leu-159. The Extracellular portion of the chain corresponds to Asp-160–Arg-191. An N-linked (GlcNAc...) asparagine glycan is attached at Asn-188. Residues Leu-192–His-212 traverse the membrane as a helical segment. Residues Ser-213–Thr-236 lie on the Cytoplasmic side of the membrane. The helical transmembrane segment at Leu-237–Leu-257 threads the bilayer. The Extracellular segment spans residues Gln-258–Gly-268. A helical transmembrane segment spans residues Ala-269–Val-289. Topologically, residues Ser-290–Leu-331 are cytoplasmic. Ser-322 is subject to Phosphoserine.

Belongs to the G-protein coupled receptor 1 family. As to expression, expressed in testis, spleen and brain (at protein level).

The protein localises to the cell membrane. Its subcellular location is the cytoplasmic vesicle membrane. Functionally, g protein-coupled receptor (GPCR) that plays a role in diverse physiological processes particularly within the immune and nervous systems. Becomes active when triggered by various endogenous ligands including endocannabinoid N-arachidonyl glycine (NAGly), delta-9-tetrahydrocannabinol or resolvin D2/RvD2 derived from the omega-3 fatty acid docosahexaenoic acid (DHA). Upon RvD2 binding, facilitates the resolution of inflammation, aiding in tissue repair and homeostasis. Mechanistically, RvD2 ligation initiates Galphas protein coupling, activation of cAMP-PKA signaling pathway and phosphorylation of STAT3, leading to RvD2-stimulated macrophage phagocytosis. Mediates NAGly-induced process of reorganization of actin filaments and induction of acrosomal exocytosis. Activation by N-arachidonoyl glycine (NAGly) can also induce apoptosis in macrophages. Plays a role in homeostasis of CD8+ subsets of intraepithelial lymphocytes (IELs) (CD8alphaalpha and CD8alphabeta IELs) in small intestine by supporting preferential migration of CD8alphaalpha T-cells to intraepithelial compartment over lamina propria compartment, and by mediating their reconstitution into small intestine after bone marrow transplant. Participates also in hypotensive responses, mediating reduction in intraocular and blood pressure. This is N-arachidonyl glycine receptor from Rattus norvegicus (Rat).